A 292-amino-acid chain; its full sequence is Shikimate dehydrogenase (NADP(+)) (292 aa).

Residues 25-27 (SKS) and threonine 72 contribute to the shikimate site. Residue lysine 76 is the Proton acceptor of the active site. Residues asparagine 97 and aspartate 113 each coordinate shikimate. Residues 137 to 141 (GAGGA), 161 to 166 (NRTQSK), and methionine 230 contribute to the NADP(+) site. Tyrosine 232 serves as a coordination point for shikimate. Glycine 254 contacts NADP(+).

Belongs to the shikimate dehydrogenase family. As to quaternary structure, homodimer.

It catalyses the reaction shikimate + NADP(+) = 3-dehydroshikimate + NADPH + H(+). The protein operates within metabolic intermediate biosynthesis; chorismate biosynthesis; chorismate from D-erythrose 4-phosphate and phosphoenolpyruvate: step 4/7. Involved in the biosynthesis of the chorismate, which leads to the biosynthesis of aromatic amino acids. Catalyzes the reversible NADPH linked reduction of 3-dehydroshikimate (DHSA) to yield shikimate (SA). This is Shikimate dehydrogenase (NADP(+)) from Shewanella sp. (strain MR-7).